The sequence spans 186 residues: Peptidyl-tRNA hydrolase (186 aa).

Residue tyrosine 14 coordinates tRNA. Histidine 19 (proton acceptor) is an active-site residue. Tyrosine 64, asparagine 66, and asparagine 112 together coordinate tRNA.

This sequence belongs to the PTH family. In terms of assembly, monomer.

The protein localises to the cytoplasm. The enzyme catalyses an N-acyl-L-alpha-aminoacyl-tRNA + H2O = an N-acyl-L-amino acid + a tRNA + H(+). Functionally, hydrolyzes ribosome-free peptidyl-tRNAs (with 1 or more amino acids incorporated), which drop off the ribosome during protein synthesis, or as a result of ribosome stalling. Its function is as follows. Catalyzes the release of premature peptidyl moieties from peptidyl-tRNA molecules trapped in stalled 50S ribosomal subunits, and thus maintains levels of free tRNAs and 50S ribosomes. This chain is Peptidyl-tRNA hydrolase, found in Bacillus cereus (strain ATCC 10987 / NRS 248).